Consider the following 84-residue polypeptide: uncharacterized protein (84 aa).

This is an uncharacterized protein from Bacillus subtilis (strain 168).